Reading from the N-terminus, the 709-residue chain is Phosphoribosylformylglycinamidine synthase subunit PurL (709 aa).

Residue histidine 36 is part of the active site. Positions 39 and 80 each coordinate ATP. A Mg(2+)-binding site is contributed by glutamate 82. Residues 83–86 (SHNH) and arginine 105 each bind substrate. The active-site Proton acceptor is the histidine 84. A Mg(2+)-binding site is contributed by aspartate 106. A substrate-binding site is contributed by glutamine 226. Residue aspartate 252 participates in Mg(2+) binding. Residue 294–296 (ETQ) participates in substrate binding. Residues aspartate 470 and glycine 507 each contribute to the ATP site. Substrate is bound at residue serine 510.

The protein belongs to the FGAMS family. In terms of assembly, monomer. Part of the FGAM synthase complex composed of 1 PurL, 1 PurQ and 2 PurS subunits.

The protein localises to the cytoplasm. The enzyme catalyses N(2)-formyl-N(1)-(5-phospho-beta-D-ribosyl)glycinamide + L-glutamine + ATP + H2O = 2-formamido-N(1)-(5-O-phospho-beta-D-ribosyl)acetamidine + L-glutamate + ADP + phosphate + H(+). Its pathway is purine metabolism; IMP biosynthesis via de novo pathway; 5-amino-1-(5-phospho-D-ribosyl)imidazole from N(2)-formyl-N(1)-(5-phospho-D-ribosyl)glycinamide: step 1/2. In terms of biological role, part of the phosphoribosylformylglycinamidine synthase complex involved in the purines biosynthetic pathway. Catalyzes the ATP-dependent conversion of formylglycinamide ribonucleotide (FGAR) and glutamine to yield formylglycinamidine ribonucleotide (FGAM) and glutamate. The FGAM synthase complex is composed of three subunits. PurQ produces an ammonia molecule by converting glutamine to glutamate. PurL transfers the ammonia molecule to FGAR to form FGAM in an ATP-dependent manner. PurS interacts with PurQ and PurL and is thought to assist in the transfer of the ammonia molecule from PurQ to PurL. The polypeptide is Phosphoribosylformylglycinamidine synthase subunit PurL (Saccharolobus islandicus (strain M.14.25 / Kamchatka #1) (Sulfolobus islandicus)).